The chain runs to 177 residues: Ubiquitin-conjugating enzyme E2 C (177 aa).

The segment at 1–31 (MSGQNIDPAANQVRQKERPRDMTTSKERHSV) is disordered. A compositionally biased stretch (basic and acidic residues) spans 14–30 (RQKERPRDMTTSKERHS). The UBC core domain occupies 30 to 175 (SVSKRLQQEL…LHEKYKTAQS (146 aa)). The active-site Glycyl thioester intermediate is the C114.

It belongs to the ubiquitin-conjugating enzyme family. In terms of assembly, component of the APC/C complex. In terms of processing, autoubiquitinated by the APC/C complex, leading to its degradation by the proteasome.

The catalysed reaction is S-ubiquitinyl-[E1 ubiquitin-activating enzyme]-L-cysteine + [E2 ubiquitin-conjugating enzyme]-L-cysteine = [E1 ubiquitin-activating enzyme]-L-cysteine + S-ubiquitinyl-[E2 ubiquitin-conjugating enzyme]-L-cysteine.. It carries out the reaction S-ubiquitinyl-[E1 ubiquitin-activating enzyme]-L-cysteine + [acceptor protein]-L-lysine = [E1 ubiquitin-activating enzyme]-L-cysteine + N(6)-monoubiquitinyl-[acceptor protein]-L-lysine.. The protein operates within protein modification; protein ubiquitination. In terms of biological role, catalyzes the covalent attachment of ubiquitin to other proteins. Acts as an essential factor of the anaphase promoting complex/cyclosome (APC/C), a cell cycle-regulated ubiquitin ligase that is essential for the transition from metaphase to anaphase in mitosis. Involved in both degradation of proteins responsible for maintaining sister chromatid cohesion at the onset of anaphase and of mitotic cyclins A and B at the exit of mitosis. Acts by initiating polyubiquitin chains on APC/C substrates, leading to the degradation of APC/C substrates by the proteasome and promoting mitotic exit. This is Ubiquitin-conjugating enzyme E2 C (UBE2C) from Spisula solidissima (Atlantic surf-clam).